The primary structure comprises 410 residues: Divergent protein kinase domain 1A (410 aa).

Topologically, residues 1-5 (MARLS) are cytoplasmic. Residues 6–26 (YVRIKYLFFSWLAVFIGSWVI) form a helical membrane-spanning segment. At 27–410 (YVRYNSYTEL…WKKISHTNDS (384 aa)) the chain is on the lumenal side.

The protein belongs to the DIPK family. Post-translationally, among the many cysteines in the lumenal domain, most are probably involved in disulfide bonds.

It localises to the endoplasmic reticulum membrane. This Xenopus laevis (African clawed frog) protein is Divergent protein kinase domain 1A (dipk1a).